A 302-amino-acid polypeptide reads, in one-letter code: Pyridoxal 5'-phosphate synthase subunit PdxS (302 aa).

Asp32 is a binding site for D-ribose 5-phosphate. The active-site Schiff-base intermediate with D-ribose 5-phosphate is Lys89. Position 161 (Gly161) interacts with D-ribose 5-phosphate. Arg173 serves as a coordination point for D-glyceraldehyde 3-phosphate. D-ribose 5-phosphate is bound by residues Gly222 and 243 to 244 (GS). Residues 276 to 302 (ASNPGKGMKGEANADLSEGEKLQTRGV) form a disordered region. Basic and acidic residues predominate over residues 293–302 (EGEKLQTRGV).

This sequence belongs to the PdxS/SNZ family. In terms of assembly, in the presence of PdxT, forms a dodecamer of heterodimers.

The catalysed reaction is aldehydo-D-ribose 5-phosphate + D-glyceraldehyde 3-phosphate + L-glutamine = pyridoxal 5'-phosphate + L-glutamate + phosphate + 3 H2O + H(+). It participates in cofactor biosynthesis; pyridoxal 5'-phosphate biosynthesis. Catalyzes the formation of pyridoxal 5'-phosphate from ribose 5-phosphate (RBP), glyceraldehyde 3-phosphate (G3P) and ammonia. The ammonia is provided by the PdxT subunit. Can also use ribulose 5-phosphate and dihydroxyacetone phosphate as substrates, resulting from enzyme-catalyzed isomerization of RBP and G3P, respectively. This Haloquadratum walsbyi (strain DSM 16790 / HBSQ001) protein is Pyridoxal 5'-phosphate synthase subunit PdxS.